Consider the following 220-residue polypeptide: Ribosomal RNA large subunit methyltransferase E (220 aa).

Residues glycine 60, tryptophan 62, aspartate 92, aspartate 108, and aspartate 133 each contribute to the S-adenosyl-L-methionine site. Residue lysine 173 is the Proton acceptor of the active site.

Belongs to the class I-like SAM-binding methyltransferase superfamily. RNA methyltransferase RlmE family.

Its subcellular location is the cytoplasm. It carries out the reaction uridine(2552) in 23S rRNA + S-adenosyl-L-methionine = 2'-O-methyluridine(2552) in 23S rRNA + S-adenosyl-L-homocysteine + H(+). Specifically methylates the uridine in position 2552 of 23S rRNA at the 2'-O position of the ribose in the fully assembled 50S ribosomal subunit. The chain is Ribosomal RNA large subunit methyltransferase E from Burkholderia thailandensis (strain ATCC 700388 / DSM 13276 / CCUG 48851 / CIP 106301 / E264).